The sequence spans 599 residues: Protein linkin (599 aa).

Residues 1–19 (MKKILPIIWLINLVSGSLS) form the signal peptide. The Extracellular segment spans residues 20–553 (LEKKAPDLLG…SRLYVTPSAL (534 aa)). N-linked (GlcNAc...) asparagine glycosylation is found at Asn50, Asn117, Asn163, Asn361, and Asn378. A helical transmembrane segment spans residues 554 to 574 (IVQSLAVIALVCCMLLMVVVF). Topologically, residues 575–599 (LHYREKKEDRYERQQQSHRFHFDAM) are cytoplasmic.

Belongs to the TIP family. Expressed in all somatic gonadal cells including distal tip cells, anchor cell, uterine precursor cells and spermatheca precursor cells of the hermaphrodite. Also expressed in the pharynx, pharyngeal-intestinal valve, intestine, excretory cell and canal, seam cells, a subset of hypodermal cells, vulval precursor cells of the hermaphrodite and hook precursor cells in the male.

The protein resides in the apical cell membrane. Its subcellular location is the lateral cell membrane. Functionally, probable cell adhesion protein involved in gonadal cell migration. The sequence is that of Protein linkin from Caenorhabditis elegans.